A 301-amino-acid polypeptide reads, in one-letter code: Zinc finger protein 346 (301 aa).

2 Matrin-type zinc fingers span residues 55–85 (SQCKVCSAVLISESQKLAHYQSKKHASKVRR) and 117–141 (KACSVCNMTFSSPVVAQSHYQGKVH). Positions 57, 60, 73, 79, 119, 122, 135, and 141 each coordinate Zn(2+). The segment at 151–177 (GSQTPALPQPEAQAKKDDGMQGPAEQD) is disordered. 2 consecutive Matrin-type zinc fingers follow at residues 180 to 210 (RFCSICQASFNNPLMAQQHYSGKKHKKHMNK) and 230 to 257 (YPCTVCNIELNSVEQYQAHISGSKHKNH). The tract at residues 250 to 283 (SGSKHKNHAKPKKGPNAFAPPPDNYQPDYQYPTN) is disordered. Residues 251 to 262 (GSKHKNHAKPKK) show a composition bias toward basic residues.

Its subcellular location is the nucleus. The protein resides in the cytoplasm. Functionally, binds preferentially to dsRNA, but also to RNA-DNA hybrids. In Danio rerio (Zebrafish), this protein is Zinc finger protein 346.